The chain runs to 263 residues: Thiamine thiazole synthase (263 aa).

NAD(+) is bound by residues Ser-43, 62–63, Gly-70, Val-134, and 160–162; these read ER and HID. Fe cation is bound by residues Asp-162 and His-177. Positions 180 and 227 each coordinate NAD(+). Arg-237 serves as a coordination point for glycine.

Belongs to the THI4 family. Homooctamer; tetramer of dimers. Requires Fe(2+) as cofactor.

The enzyme catalyses hydrogen sulfide + glycine + NAD(+) = ADP-5-ethyl-4-methylthiazole-2-carboxylate + nicotinamide + 3 H2O + H(+). The protein operates within cofactor biosynthesis; thiamine diphosphate biosynthesis. Its function is as follows. Involved in the biosynthesis of the thiazole moiety of thiamine. Catalyzes the conversion of NAD and glycine to adenosine diphosphate 5-(2-hydroxyethyl)-4-methylthiazole-2-carboxylate (ADT), an adenylated thiazole intermediate, using free sulfide as a source of sulfur. The chain is Thiamine thiazole synthase from Methanococcus aeolicus (strain ATCC BAA-1280 / DSM 17508 / OCM 812 / Nankai-3).